A 204-amino-acid polypeptide reads, in one-letter code: Guanylate kinase (204 aa).

Positions 3–181 constitute a Guanylate kinase-like domain; that stretch reads GTLIIITAPS…ALDDLVAVVR (179 aa). 10 to 17 contributes to the ATP binding site; it reads APSGAGKT.

This sequence belongs to the guanylate kinase family.

It localises to the cytoplasm. It carries out the reaction GMP + ATP = GDP + ADP. Its function is as follows. Essential for recycling GMP and indirectly, cGMP. The polypeptide is Guanylate kinase (Aromatoleum aromaticum (strain DSM 19018 / LMG 30748 / EbN1) (Azoarcus sp. (strain EbN1))).